The chain runs to 273 residues: Ribosomal RNA small subunit methyltransferase A (273 aa).

Residues Asn18, Leu20, Gly45, Glu66, Asp91, and Asn113 each coordinate S-adenosyl-L-methionine.

The protein belongs to the class I-like SAM-binding methyltransferase superfamily. rRNA adenine N(6)-methyltransferase family. RsmA subfamily.

It is found in the cytoplasm. It carries out the reaction adenosine(1518)/adenosine(1519) in 16S rRNA + 4 S-adenosyl-L-methionine = N(6)-dimethyladenosine(1518)/N(6)-dimethyladenosine(1519) in 16S rRNA + 4 S-adenosyl-L-homocysteine + 4 H(+). In terms of biological role, specifically dimethylates two adjacent adenosines (A1518 and A1519) in the loop of a conserved hairpin near the 3'-end of 16S rRNA in the 30S particle. May play a critical role in biogenesis of 30S subunits. This is Ribosomal RNA small subunit methyltransferase A from Escherichia coli O1:K1 / APEC.